Here is a 329-residue protein sequence, read N- to C-terminus: tRNA N6-adenosine threonylcarbamoyltransferase (329 aa).

Fe cation is bound by residues His108, His112, and Tyr129. Substrate contacts are provided by residues 129–133 (YVSGG), Asp161, Glu182, and Ser261. Asp289 contributes to the Fe cation binding site.

This sequence belongs to the KAE1 / TsaD family. The cofactor is Fe(2+).

Its subcellular location is the cytoplasm. It catalyses the reaction L-threonylcarbamoyladenylate + adenosine(37) in tRNA = N(6)-L-threonylcarbamoyladenosine(37) in tRNA + AMP + H(+). Its function is as follows. Required for the formation of a threonylcarbamoyl group on adenosine at position 37 (t(6)A37) in tRNAs that read codons beginning with adenine. Is probably involved in the transfer of the threonylcarbamoyl moiety of threonylcarbamoyl-AMP (TC-AMP) to the N6 group of A37. The protein is tRNA N6-adenosine threonylcarbamoyltransferase of Ignicoccus hospitalis (strain KIN4/I / DSM 18386 / JCM 14125).